The following is a 442-amino-acid chain: Proline--tRNA ligase (442 aa).

It belongs to the class-II aminoacyl-tRNA synthetase family. ProS type 2 subfamily. Homodimer.

The protein resides in the cytoplasm. It catalyses the reaction tRNA(Pro) + L-proline + ATP = L-prolyl-tRNA(Pro) + AMP + diphosphate. Functionally, catalyzes the attachment of proline to tRNA(Pro) in a two-step reaction: proline is first activated by ATP to form Pro-AMP and then transferred to the acceptor end of tRNA(Pro). The chain is Proline--tRNA ligase from Mesorhizobium japonicum (strain LMG 29417 / CECT 9101 / MAFF 303099) (Mesorhizobium loti (strain MAFF 303099)).